The following is a 243-amino-acid chain: Large ribosomal subunit protein uL3 (243 aa).

2 disordered regions span residues 139 to 164 (VSHRSIGSTGGRQDPGKTFKNKKMPG) and 218 to 243 (KPGKFKLADGGDKAAAAPEATAGEGA). At glutamine 151 the chain carries N5-methylglutamine. Basic and acidic residues predominate over residues 218 to 229 (KPGKFKLADGGD). Residues 230-243 (KAAAAPEATAGEGA) are compositionally biased toward low complexity.

It belongs to the universal ribosomal protein uL3 family. Part of the 50S ribosomal subunit. Forms a cluster with proteins L14 and L19. Methylated by PrmB.

One of the primary rRNA binding proteins, it binds directly near the 3'-end of the 23S rRNA, where it nucleates assembly of the 50S subunit. The protein is Large ribosomal subunit protein uL3 of Afipia carboxidovorans (strain ATCC 49405 / DSM 1227 / KCTC 32145 / OM5) (Oligotropha carboxidovorans).